A 1450-amino-acid polypeptide reads, in one-letter code: Sister chromatid cohesion protein PDS5 homolog (1450 aa).

3 disordered regions span residues 1–145, 680–707, and 1340–1450; these read MATR…KETK, VGGSTTPTSKKSQPPQQQQQQQQQQQQQ, and LPPL…EVEN. Residues 45–59 are compositionally biased toward acidic residues; it reads DDGELDSDIDEEDES. Residues 77-138 show a composition bias toward low complexity; that stretch reads KTQQQPQKSI…TSSSSQQSTQ (62 aa). The stretch at 650-716 forms a coiled coil; it reads KQLFKKYLEE…QLQQPENDIE (67 aa). The span at 682-691 shows a compositional bias: polar residues; that stretch reads GSTTPTSKKS. Composition is skewed to low complexity over residues 692-707 and 1350-1363; these read QPPQQQQQQQQQQQQQ and NNNNNNNNTNSTNN. Basic and acidic residues predominate over residues 1369–1378; sequence DENNNNKNDN. Residues 1387–1401 are compositionally biased toward low complexity; sequence NSTTAVPQKSIISKP. The span at 1402-1427 shows a compositional bias: basic residues; the sequence is PAKKVSKKAAAKQKSPKKKTNKKKKQ. Acidic residues predominate over residues 1430 to 1450; that stretch reads SEEEVSSSEEEDESQDEEVEN.

The protein belongs to the PDS5 family.

It is found in the nucleus. In terms of biological role, may regulate sister chromatid cohesion during mitosis and couple it to DNA replication. The protein is Sister chromatid cohesion protein PDS5 homolog of Dictyostelium discoideum (Social amoeba).